The primary structure comprises 104 residues: uncharacterized protein (104 aa).

As to quaternary structure, homodimer.

This is an uncharacterized protein from Bacillus subtilis (strain 168).